The sequence spans 586 residues: UvrABC system protein C (586 aa).

The GIY-YIG domain maps to 17-94 (HKPGCYLWKD…IKQYKPRFNL (78 aa)). The region spanning 201-236 (EQVLNHLQQQEIKASEQQNFEAARHFLDLQKAVLEL) is the UVR domain.

This sequence belongs to the UvrC family. Interacts with UvrB in an incision complex.

The protein resides in the cytoplasm. The UvrABC repair system catalyzes the recognition and processing of DNA lesions. UvrC both incises the 5' and 3' sides of the lesion. The N-terminal half is responsible for the 3' incision and the C-terminal half is responsible for the 5' incision. This chain is UvrABC system protein C, found in Mycoplasma pneumoniae (strain ATCC 29342 / M129 / Subtype 1) (Mycoplasmoides pneumoniae).